The following is an 82-amino-acid chain: Putative membrane protein insertion efficiency factor (82 aa).

Belongs to the UPF0161 family.

The protein localises to the cell inner membrane. In terms of biological role, could be involved in insertion of integral membrane proteins into the membrane. This chain is Putative membrane protein insertion efficiency factor, found in Rickettsia rickettsii (strain Iowa).